The following is a 221-amino-acid chain: 7-cyano-7-deazaguanine synthase (221 aa).

Position 10 to 20 (10 to 20) interacts with ATP; sequence FSGGQDSTTCL. Zn(2+) contacts are provided by Cys186, Cys195, Cys198, and Cys201.

This sequence belongs to the QueC family. In terms of assembly, homodimer. It depends on Zn(2+) as a cofactor.

It carries out the reaction 7-carboxy-7-deazaguanine + NH4(+) + ATP = 7-cyano-7-deazaguanine + ADP + phosphate + H2O + H(+). It functions in the pathway purine metabolism; 7-cyano-7-deazaguanine biosynthesis. Its function is as follows. Catalyzes the ATP-dependent conversion of 7-carboxy-7-deazaguanine (CDG) to 7-cyano-7-deazaguanine (preQ(0)). The chain is 7-cyano-7-deazaguanine synthase from Anoxybacillus flavithermus (strain DSM 21510 / WK1).